A 423-amino-acid polypeptide reads, in one-letter code: Histidine--tRNA ligase (423 aa).

This sequence belongs to the class-II aminoacyl-tRNA synthetase family. In terms of assembly, homodimer.

Its subcellular location is the cytoplasm. The enzyme catalyses tRNA(His) + L-histidine + ATP = L-histidyl-tRNA(His) + AMP + diphosphate + H(+). The protein is Histidine--tRNA ligase of Phytoplasma mali (strain AT).